A 133-amino-acid polypeptide reads, in one-letter code: Ubiquitin-like FUBI-ribosomal protein eS30 fusion protein (133 aa).

The 74-residue stretch at 1–74 folds into the Ubiquitin-like domain; that stretch reads MQLFVRAQEL…LEVAGRMLGG (74 aa). The residue at position 125 (Lys-125) is an N6-succinyllysine.

This sequence in the N-terminal section; belongs to the ubiquitin family. The protein in the C-terminal section; belongs to the eukaryotic ribosomal protein eS30 family. As to quaternary structure, component of the 40S subunit of the ribosome. In terms of processing, FUBI is cleaved from ribosomal protein S30 by the deubiquitinase USP36 before the assembly of ribosomal protein S30 into pre-40S ribosomal particles. FUBI removal from ribosomal protein S30 is a crucial event for the final maturation of pre-40S particles.

It is found in the cytoplasm. It localises to the nucleus. Functionally, may have pro-apoptotic activity. In terms of biological role, component of the 40S subunit of the ribosome. Contributes to the assembly and function of 40S ribosomal subunits. This chain is Ubiquitin-like FUBI-ribosomal protein eS30 fusion protein (FAU), found in Oryctolagus cuniculus (Rabbit).